Consider the following 338-residue polypeptide: Phytanoyl-CoA dioxygenase, peroxisomal (338 aa).

A peroxisome-targeting transit peptide spans 1-30 (MEQLRAAARLQIVLGHLGRPSAGAVVAHPT). Lys59 and Lys108 each carry N6-succinyllysine. 2-oxoglutarate-binding positions include Lys120, Met157, 175-177 (HQD), and Trp193. Fe cation-binding residues include His175 and Asp177. Lys231 and Lys252 each carry N6-succinyllysine. A Fe cation-binding site is contributed by His264. Residues Ser266 and Arg275 each contribute to the 2-oxoglutarate site. Ser317 is subject to Phosphoserine.

This sequence belongs to the PhyH family. Interacts with FKBP52. Interacts with PHYHIP. Fe cation is required as a cofactor. L-ascorbate serves as cofactor. Requires ATP as cofactor. The cofactor is Mg(2+). In terms of tissue distribution, expressed in liver, kidney, and T-cells, but not in spleen, brain, heart, lung and skeletal muscle.

The protein localises to the peroxisome. The enzyme catalyses phytanoyl-CoA + 2-oxoglutarate + O2 = 2-hydroxyphytanoyl-CoA + succinate + CO2. It catalyses the reaction 3-methylhexadecanoyl-CoA + 2-oxoglutarate + O2 = 2-hydroxy-3-methylhexadecanoyl-CoA + succinate + CO2. It carries out the reaction hexadecanoyl-CoA + 2-oxoglutarate + O2 = 2-hydroxyhexadecanoyl-CoA + succinate + CO2. The catalysed reaction is octanoyl-CoA + 2-oxoglutarate + O2 = 2-hydroxyoctanoyl-CoA + succinate + CO2. The enzyme catalyses decanoyl-CoA + 2-oxoglutarate + O2 = 2-hydroxydecanoyl-CoA + succinate + CO2. It catalyses the reaction 3-methylbutanoyl-CoA + 2-oxoglutarate + O2 = 2-hydroxy-3-methylbutanoyl-CoA + succinate + CO2. It carries out the reaction heptadecanoyl-CoA + 2-oxoglutarate + O2 = 2-hydroxyheptadecanoyl-CoA + succinate + CO2. The catalysed reaction is eicosanoyl-CoA + 2-oxoglutarate + O2 = 2-hydroxyeicosanoyl-CoA + succinate + CO2. The enzyme catalyses octadecanoyl-CoA + 2-oxoglutarate + O2 = 2-hydroxyoctadecanoyl-CoA + succinate + CO2. It catalyses the reaction dodecanoyl-CoA + 2-oxoglutarate + O2 = 2-hydroxydodecanoyl-CoA + succinate + CO2. It carries out the reaction tetradecanoyl-CoA + 2-oxoglutarate + O2 = 2-hydroxytetradecanoyl-CoA + succinate + CO2. The catalysed reaction is hexanoyl-CoA + 2-oxoglutarate + O2 = 2-hydroxyhexanoyl-CoA + succinate + CO2. The enzyme catalyses butanoyl-CoA + 2-oxoglutarate + O2 = 2-hydroxybutanoyl-CoA + succinate + CO2. It catalyses the reaction 3-methylnonanoyl-CoA + 2-oxoglutarate + O2 = 2-hydroxy-3-methylnonanoyl-CoA + succinate + CO2. It carries out the reaction 3-methylundecanoyl-CoA + 2-oxoglutarate + O2 = 2-hydroxy-3-methylundecanoyl-CoA + succinate + CO2. The catalysed reaction is 3-methyldodecanoyl-CoA + 2-oxoglutarate + O2 = 2-hydroxy-3-methyldodecanoyl-CoA + succinate + CO2. Its pathway is lipid metabolism; fatty acid metabolism. Its function is as follows. Catalyzes the 2-hydroxylation of not only racemic phytanoyl-CoA and the isomers of 3-methylhexadecanoyl-CoA, but also a variety of other mono-branched 3-methylacyl-CoA esters (with a chain length of at least seven carbon atoms) and straight-chain acyl-CoA esters (with a chain length longer than four carbon atoms). Does not hydroxylate long and very long straight chain acyl-CoAs or 2-methyl- and 4-methyl-branched acyl-CoAs. This is Phytanoyl-CoA dioxygenase, peroxisomal (PHYH) from Homo sapiens (Human).